We begin with the raw amino-acid sequence, 126 residues long: Scygonadin (126 aa).

Residues 1–24 (MRSSLLLGLTVVVLLGVIVPPCMA) form the signal peptide.

In terms of tissue distribution, expressed in the ejaculatory ducts of mature males. Not detected in the ejaculatory ducts of immature males. Not detected in hepatopancreas, female reproductive tract, eyes, exoskeleton, subcuticular epithelia, heart, gills, stomach, muscle and hemocytes.

Its subcellular location is the secreted. In terms of biological role, has antibacterial activity against the Gram-positive bacterium M.luteus with an IC(90) of 125ug/ml. Has weak antibacterial activity against the Gram-negative bacterium A.hydrophila. The chain is Scygonadin from Scylla serrata (Mud crab).